The chain runs to 443 residues: Type I restriction enzyme HindI methylase subunit (443 aa).

S-adenosyl-L-methionine contacts are provided by residues 117 to 122 (QYFTPK), 146 to 148 (SGG), and E173.

Belongs to the N(4)/N(6)-methyltransferase family. As to quaternary structure, the type I restriction/modification system is composed of three polypeptides R, M and S; the restriction enzyme has stoichiometry R(2)M(2)S(1) while the methyltransferase is M(2)S(1).

It catalyses the reaction a 2'-deoxyadenosine in DNA + S-adenosyl-L-methionine = an N(6)-methyl-2'-deoxyadenosine in DNA + S-adenosyl-L-homocysteine + H(+). Functionally, the subtype gamma methyltransferase (M) subunit of a type I restriction enzyme. The M and S subunits together form a methyltransferase (MTase) that methylates adenosines in the sequence 5'-RAACN(5)TAG-3'. Methylation protects against cleavage by HindI. In the presence of the R subunit the complex can also act as an endonuclease, binding to the same target sequence but cutting the DNA some distance from this site. Whether the DNA is cut or modified depends on the methylation state of the target sequence. When the target site is unmodified, the DNA is cut. When the target site is hemimethylated, the complex acts as a maintenance MTase modifying the DNA so that both strands become methylated. After locating a non-methylated recognition site, the enzyme complex serves as a molecular motor that translocates DNA in an ATP-dependent manner until a collision occurs that triggers cleavage. In Haemophilus influenzae (strain ATCC 51907 / DSM 11121 / KW20 / Rd), this protein is Type I restriction enzyme HindI methylase subunit.